The following is a 181-amino-acid chain: Large ribosomal subunit protein uL5 (181 aa).

This sequence belongs to the universal ribosomal protein uL5 family. In terms of assembly, part of the 50S ribosomal subunit; contacts the 5S rRNA and probably tRNA. Forms a bridge to the 30S subunit in the 70S ribosome.

In terms of biological role, this is one of the proteins that bind and probably mediate the attachment of the 5S RNA into the large ribosomal subunit, where it forms part of the central protuberance. In the 70S ribosome it contacts protein S13 of the 30S subunit (bridge B1b), connecting the 2 subunits; this bridge is implicated in subunit movement. May contact the P site tRNA; the 5S rRNA and some of its associated proteins might help stabilize positioning of ribosome-bound tRNAs. This Methanococcus vannielii protein is Large ribosomal subunit protein uL5.